The sequence spans 322 residues: Acetyl-coenzyme A carboxylase carboxyl transferase subunit alpha (322 aa).

A CoA carboxyltransferase C-terminal domain is found at 30–293 (ALDISAEITR…RQALQESLRK (264 aa)).

Belongs to the AccA family. Acetyl-CoA carboxylase is a heterohexamer composed of biotin carboxyl carrier protein (AccB), biotin carboxylase (AccC) and two subunits each of ACCase subunit alpha (AccA) and ACCase subunit beta (AccD).

It localises to the cytoplasm. It catalyses the reaction N(6)-carboxybiotinyl-L-lysyl-[protein] + acetyl-CoA = N(6)-biotinyl-L-lysyl-[protein] + malonyl-CoA. It functions in the pathway lipid metabolism; malonyl-CoA biosynthesis; malonyl-CoA from acetyl-CoA: step 1/1. Its function is as follows. Component of the acetyl coenzyme A carboxylase (ACC) complex. First, biotin carboxylase catalyzes the carboxylation of biotin on its carrier protein (BCCP) and then the CO(2) group is transferred by the carboxyltransferase to acetyl-CoA to form malonyl-CoA. This chain is Acetyl-coenzyme A carboxylase carboxyl transferase subunit alpha, found in Nitrosomonas eutropha (strain DSM 101675 / C91 / Nm57).